A 245-amino-acid polypeptide reads, in one-letter code: TLC domain-containing protein 5 (245 aa).

6 helical membrane passes run 1 to 21 (MALA…SLYI), 38 to 58 (LVTF…GFID), 75 to 95 (VHVL…CVYF), 99 to 119 (GALM…ALVL), 162 to 182 (FLFV…LLFC), and 191 to 211 (WFVK…MFSI). A TLC domain is found at 29-204 (HRSYEWSCRL…AGGVAMYAVS (176 aa)).

The protein belongs to the TLCD5 family.

The protein localises to the membrane. The chain is TLC domain-containing protein 5 from Homo sapiens (Human).